We begin with the raw amino-acid sequence, 195 residues long: Glycerol-3-phosphate acyltransferase (195 aa).

5 helical membrane-spanning segments follow: residues 3-23 (EAAL…YFFT), 51-71 (GVAL…AWIG), 79-99 (LLVI…FLGF), 111-131 (IILF…LAIV), and 153-173 (LAMG…ALVV).

It belongs to the PlsY family. Probably interacts with PlsX.

It is found in the cell membrane. It carries out the reaction an acyl phosphate + sn-glycerol 3-phosphate = a 1-acyl-sn-glycero-3-phosphate + phosphate. It functions in the pathway lipid metabolism; phospholipid metabolism. Catalyzes the transfer of an acyl group from acyl-phosphate (acyl-PO(4)) to glycerol-3-phosphate (G3P) to form lysophosphatidic acid (LPA). This enzyme utilizes acyl-phosphate as fatty acyl donor, but not acyl-CoA or acyl-ACP. This chain is Glycerol-3-phosphate acyltransferase, found in Syntrophomonas wolfei subsp. wolfei (strain DSM 2245B / Goettingen).